The chain runs to 71 residues: Cell division protein ZapB (71 aa).

Positions 5-67 form a coiled coil; it reads LEVLEQLESK…RALLGKMDQM (63 aa).

Belongs to the ZapB family. Homodimer. The ends of the coiled-coil dimer bind to each other, forming polymers. Interacts with FtsZ.

It is found in the cytoplasm. Functionally, non-essential, abundant cell division factor that is required for proper Z-ring formation. It is recruited early to the divisome by direct interaction with FtsZ, stimulating Z-ring assembly and thereby promoting cell division earlier in the cell cycle. Its recruitment to the Z-ring requires functional FtsA or ZipA. The protein is Cell division protein ZapB of Aeromonas hydrophila subsp. hydrophila (strain ATCC 7966 / DSM 30187 / BCRC 13018 / CCUG 14551 / JCM 1027 / KCTC 2358 / NCIMB 9240 / NCTC 8049).